The chain runs to 426 residues: G2/mitotic-specific cyclin-A (426 aa).

A compositionally biased stretch (polar residues) spans 1–11 (MSMVHGSSFQI). The segment at 1–22 (MSMVHGSSFQIAQDGENENQGV) is disordered.

The protein belongs to the cyclin family. Cyclin AB subfamily.

In terms of biological role, essential for the control of the cell cycle at the G2/M (mitosis) transition. Interacts with the CDC2 and CDK2 protein kinases to form MPF. G2/M cyclins accumulate steadily during G2 and are abruptly destroyed at mitosis. The chain is G2/mitotic-specific cyclin-A from Patella vulgata (Common limpet).